The chain runs to 89 residues: Small ribosomal subunit protein uS15 (89 aa).

It belongs to the universal ribosomal protein uS15 family. Part of the 30S ribosomal subunit. Forms a bridge to the 50S subunit in the 70S ribosome, contacting the 23S rRNA.

One of the primary rRNA binding proteins, it binds directly to 16S rRNA where it helps nucleate assembly of the platform of the 30S subunit by binding and bridging several RNA helices of the 16S rRNA. Its function is as follows. Forms an intersubunit bridge (bridge B4) with the 23S rRNA of the 50S subunit in the ribosome. The polypeptide is Small ribosomal subunit protein uS15 (Renibacterium salmoninarum (strain ATCC 33209 / DSM 20767 / JCM 11484 / NBRC 15589 / NCIMB 2235)).